Consider the following 265-residue polypeptide: NAD kinase (265 aa).

Residue D45 is the Proton acceptor of the active site. Residues 45–46 (DG), 121–122 (NE), R147, D149, A184, and Q221 each bind NAD(+).

Belongs to the NAD kinase family. The cofactor is a divalent metal cation.

The protein localises to the cytoplasm. The enzyme catalyses NAD(+) + ATP = ADP + NADP(+) + H(+). In terms of biological role, involved in the regulation of the intracellular balance of NAD and NADP, and is a key enzyme in the biosynthesis of NADP. Catalyzes specifically the phosphorylation on 2'-hydroxyl of the adenosine moiety of NAD to yield NADP. In Leuconostoc citreum (strain KM20), this protein is NAD kinase.